The primary structure comprises 343 residues: Ion-translocating oxidoreductase complex subunit D (343 aa).

4 consecutive transmembrane segments (helical) span residues 24 to 44 (VLLA…AGTL), 45 to 65 (YNLA…LAAR), 69 to 91 (LAFF…ALPP), and 124 to 144 (AMLG…SWPA). T171 is subject to FMN phosphoryl threonine. 5 helical membrane passes run 197-217 (FGGA…LYLL), 221-241 (LITW…SLLF), 251-271 (GSPL…FIVT), 284-304 (LVFG…GGYP), and 305-325 (DAVA…DYYT).

Belongs to the NqrB/RnfD family. In terms of assembly, the complex is composed of six subunits: RnfA, RnfB, RnfC, RnfD, RnfE and RnfG. FMN is required as a cofactor.

The protein localises to the cell inner membrane. Part of a membrane-bound complex that couples electron transfer with translocation of ions across the membrane. This is Ion-translocating oxidoreductase complex subunit D from Ectopseudomonas mendocina (strain ymp) (Pseudomonas mendocina).